A 135-amino-acid polypeptide reads, in one-letter code: UPF0102 protein Mkms_2031 (135 aa).

The protein belongs to the UPF0102 family.

The chain is UPF0102 protein Mkms_2031 from Mycobacterium sp. (strain KMS).